The primary structure comprises 182 residues: Putative manganese efflux pump MntP (182 aa).

6 consecutive transmembrane segments (helical) span residues 6-26 (LIPLIIMAFALGMDAFSVSLG), 37-57 (ILYIGVTIGIFHIIMPFIGMV), 71-91 (HFAGAILLIGLGFYIVYSSIL), 101-121 (IGISLFVFAFGVSIDSFSVGL), 131-151 (IITILLFGFVSMLLAWIGLLI), and 162-182 (YGEIVGGIILVGFGLYLLFPI).

The protein belongs to the MntP (TC 9.B.29) family.

The protein resides in the cell membrane. In terms of biological role, probably functions as a manganese efflux pump. This chain is Putative manganese efflux pump MntP, found in Bacillus anthracis (strain A0248).